We begin with the raw amino-acid sequence, 1366 residues long: ABC multidrug transporter MDR2 (1366 aa).

A helical transmembrane segment spans residues Ile52–Leu72. One can recognise an ABC transmembrane type-1 1 domain in the interval Val56–Ser354. An N-linked (GlcNAc...) asparagine glycan is attached at Asn84. The next 5 helical transmembrane spans lie at Val106–Cys126, Lys180–Leu200, Val202–Gly222, Ile288–Gly308, and Val323–Ser343. The ABC transporter 1 domain occupies Ile390–Leu669. ATP is bound at residue Gly425–Ser432. N-linked (GlcNAc...) asparagine glycosylation is present at Asn620. The tract at residues Pro727 to Gln746 is disordered. The next 4 membrane-spanning stretches (helical) occupy residues Leu768–Gly788, Gly807–Val827, Leu868–Ile888, and Leu898–Ala918. Residues Leu768 to Lys1055 form the ABC transmembrane type-1 2 domain. The N-linked (GlcNAc...) asparagine glycan is linked to Asn976. Transmembrane regions (helical) follow at residues Phe995–Gly1015 and Ile1019–Ser1039. One can recognise an ABC transporter 2 domain in the interval Val1122–His1361. Gly1157–Ser1164 is a binding site for ATP.

The protein belongs to the ABC transporter superfamily. ABCB family. Multidrug resistance exporter (TC 3.A.1.201) subfamily.

It is found in the cell membrane. Functionally, pleiotropic ABC efflux transporter that may be involved in the modulation susceptibility to a wide range of unrelated cytotoxic compounds. Does not act as an efflux pump for azoles, including fluconazole, itraconazole, ketoconazole, miconazole and voriconazole, nor does it modulate susceptibility to cycloheximide. The protein is ABC multidrug transporter MDR2 of Trichophyton rubrum (strain ATCC MYA-4607 / CBS 118892) (Athlete's foot fungus).